The sequence spans 120 residues: Large ribosomal subunit protein eL34z (120 aa).

A disordered region spans residues 31-51 (VYQTTKKRASGPKCPVTGKRI).

This sequence belongs to the eukaryotic ribosomal protein eL34 family.

The chain is Large ribosomal subunit protein eL34z (RPL34A) from Arabidopsis thaliana (Mouse-ear cress).